Consider the following 859-residue polypeptide: Leucine--tRNA ligase (859 aa).

The 'HIGH' region motif lies at 42–52 (PYPSGRLHMGH). The 'KMSKS' region signature appears at 618–622 (KMSKS). Lys-621 provides a ligand contact to ATP.

It belongs to the class-I aminoacyl-tRNA synthetase family.

It localises to the cytoplasm. The enzyme catalyses tRNA(Leu) + L-leucine + ATP = L-leucyl-tRNA(Leu) + AMP + diphosphate. The sequence is that of Leucine--tRNA ligase from Shewanella pealeana (strain ATCC 700345 / ANG-SQ1).